We begin with the raw amino-acid sequence, 1756 residues long: Periplakin (1756 aa).

Serine 14 is subject to Phosphoserine. Coiled-coil stretches lie at residues 16 to 125 and 188 to 389; these read TVQT…KQIY and KEQN…QQVV. Spectrin repeat units lie at residues 216–317, 323–485, 505–612, and 733–861; these read QDYM…SHLK, HQFH…RTLQ, RQLL…EKVD, and EHFH…QNLE. The 57-residue stretch at 399 to 455 folds into the SH3 domain; the sequence is LKPIPVEALCDFEGEQGLISRGYSYTLQKNNGESWELMDSAGNKLIAPAVCFVIPPT. Phosphoserine is present on serine 465. Coiled coils occupy residues 585-820 and 886-1645; these read LLRT…GRRS and DSGV…SVAV. Phosphoserine occurs at positions 887, 949, 1584, and 1657. Positions 1557-1756 are interacts with BFSP2 and VIM; that stretch reads ELDFLREENH…ELAVLVSGQK (200 aa). Plectin repeat units follow at residues 1651–1685 and 1700–1735; these read ENHL…WNMF and VKGP…PAQY.

The protein belongs to the plakin or cytolinker family. In terms of assembly, homodimer or a heterodimer with EVPL. Found in a complex composed of PPL (via C-terminal linker domain), BFSP1 and BFSP2 in the retinal lens. Within the complex interacts (via C-terminal linker domain) with BFSP2. Interacts with VIM. Binds to the PH domain of AKT1. Interacts with FCGR1A. May interact with PPHLN1. In terms of tissue distribution, expressed in stratified squamous epithelia and in some other epithelia.

The protein resides in the cell junction. The protein localises to the desmosome. Its subcellular location is the cytoplasm. It localises to the cytoskeleton. It is found in the cell membrane. Component of the cornified envelope of keratinocytes. May link the cornified envelope to desmosomes and intermediate filaments. May act as a localization signal in PKB/AKT-mediated signaling. This chain is Periplakin (PPL), found in Homo sapiens (Human).